The following is a 388-amino-acid chain: Protein FAM199X (388 aa).

Residues S288–S312 show a composition bias toward low complexity. A disordered region spans residues S288–K358. S316 and S321 each carry phosphoserine. Basic residues predominate over residues D330 to Q349.

Belongs to the FAM199 family.

The polypeptide is Protein FAM199X (Fam199x) (Mus musculus (Mouse)).